The sequence spans 482 residues: tRNA sulfurtransferase (482 aa).

Positions Leu61–Arg165 constitute a THUMP domain. Residues Leu183–Ile184, Lys265, Gly287, and Gln296 each bind ATP. The cysteines at positions 344 and 456 are disulfide-linked. One can recognise a Rhodanese domain in the interval Phe404–Pro482. Cys456 (cysteine persulfide intermediate) is an active-site residue.

It belongs to the ThiI family.

The protein localises to the cytoplasm. The catalysed reaction is [ThiI sulfur-carrier protein]-S-sulfanyl-L-cysteine + a uridine in tRNA + 2 reduced [2Fe-2S]-[ferredoxin] + ATP + H(+) = [ThiI sulfur-carrier protein]-L-cysteine + a 4-thiouridine in tRNA + 2 oxidized [2Fe-2S]-[ferredoxin] + AMP + diphosphate. It carries out the reaction [ThiS sulfur-carrier protein]-C-terminal Gly-Gly-AMP + S-sulfanyl-L-cysteinyl-[cysteine desulfurase] + AH2 = [ThiS sulfur-carrier protein]-C-terminal-Gly-aminoethanethioate + L-cysteinyl-[cysteine desulfurase] + A + AMP + 2 H(+). The protein operates within cofactor biosynthesis; thiamine diphosphate biosynthesis. Catalyzes the ATP-dependent transfer of a sulfur to tRNA to produce 4-thiouridine in position 8 of tRNAs, which functions as a near-UV photosensor. Also catalyzes the transfer of sulfur to the sulfur carrier protein ThiS, forming ThiS-thiocarboxylate. This is a step in the synthesis of thiazole, in the thiamine biosynthesis pathway. The sulfur is donated as persulfide by IscS. The protein is tRNA sulfurtransferase of Escherichia coli (strain 55989 / EAEC).